The sequence spans 287 residues: Bifunctional protein FolD (287 aa).

Residues 166–168 (GAS) and Ile-232 each bind NADP(+).

This sequence belongs to the tetrahydrofolate dehydrogenase/cyclohydrolase family. In terms of assembly, homodimer.

It carries out the reaction (6R)-5,10-methylene-5,6,7,8-tetrahydrofolate + NADP(+) = (6R)-5,10-methenyltetrahydrofolate + NADPH. The enzyme catalyses (6R)-5,10-methenyltetrahydrofolate + H2O = (6R)-10-formyltetrahydrofolate + H(+). The protein operates within one-carbon metabolism; tetrahydrofolate interconversion. Its function is as follows. Catalyzes the oxidation of 5,10-methylenetetrahydrofolate to 5,10-methenyltetrahydrofolate and then the hydrolysis of 5,10-methenyltetrahydrofolate to 10-formyltetrahydrofolate. This Chromohalobacter salexigens (strain ATCC BAA-138 / DSM 3043 / CIP 106854 / NCIMB 13768 / 1H11) protein is Bifunctional protein FolD.